Reading from the N-terminus, the 322-residue chain is Olfactory receptor 11L1 (322 aa).

Residues 1 to 25 (MEPQNTSTVTNFQLLGFQNLLEWQA) lie on the Extracellular side of the membrane. Asparagine 5 carries N-linked (GlcNAc...) asparagine glycosylation. Residues 26–46 (LLFVIFLLIYCLTIIGNVVII) form a helical membrane-spanning segment. The Cytoplasmic portion of the chain corresponds to 47-54 (TVVSQGLR). A helical membrane pass occupies residues 55 to 75 (LHSPMYMFLQHLSFLEVWYTS). Over 76–99 (TTVPLLLANLLSWGQAISFSACMA) the chain is Extracellular. Cysteine 97 and cysteine 189 form a disulfide bridge. A helical membrane pass occupies residues 100–120 (QLYFFVFLGATECFLLAFMAY). Topologically, residues 121–139 (DRYLAICSPLRYPFLMHRG) are cytoplasmic. Residues 140–160 (LCARLVVVSWCTGVSTGFLPS) traverse the membrane as a helical segment. The Extracellular portion of the chain corresponds to 161–197 (LMISRLDFCGRNQINHFFCDLPPLMQLSCSRVYITEV). A helical transmembrane segment spans residues 198-217 (TIFILSIAVLCICFFLTLGP). Residues 218-237 (YVFIVSSILRIPSTSGRRKT) lie on the Cytoplasmic side of the membrane. The helical transmembrane segment at 238–258 (FSTCGSHLAVVTLYYGTMISM) threads the bilayer. Residues 259–271 (YVCPSPHLLPEIN) lie on the Extracellular side of the membrane. Residues 272 to 292 (KIISVFYTVVTPLLNPVIYSL) traverse the membrane as a helical segment. At 293–322 (RNKDFKEAVRKVMRRKCGILWSTSKRKFLY) the chain is on the cytoplasmic side.

It belongs to the G-protein coupled receptor 1 family.

The protein localises to the cell membrane. Its function is as follows. Odorant receptor. The protein is Olfactory receptor 11L1 (OR11L1) of Homo sapiens (Human).